We begin with the raw amino-acid sequence, 591 residues long: Aspartate--tRNA(Asp/Asn) ligase (591 aa).

Glu174 contacts L-aspartate. The interval Gln198–Lys201 is aspartate. Arg220 is an L-aspartate binding site. Residues Arg220–Glu222 and Gln229 each bind ATP. An L-aspartate-binding site is contributed by His450. Glu483 provides a ligand contact to ATP. Arg490 provides a ligand contact to L-aspartate. Gly535–Arg538 contacts ATP.

The protein belongs to the class-II aminoacyl-tRNA synthetase family. Type 1 subfamily. As to quaternary structure, homodimer.

The protein resides in the cytoplasm. The enzyme catalyses tRNA(Asx) + L-aspartate + ATP = L-aspartyl-tRNA(Asx) + AMP + diphosphate. Its function is as follows. Aspartyl-tRNA synthetase with relaxed tRNA specificity since it is able to aspartylate not only its cognate tRNA(Asp) but also tRNA(Asn). Reaction proceeds in two steps: L-aspartate is first activated by ATP to form Asp-AMP and then transferred to the acceptor end of tRNA(Asp/Asn). The sequence is that of Aspartate--tRNA(Asp/Asn) ligase from Pseudomonas putida (strain GB-1).